Consider the following 150-residue polypeptide: MKYQQLENLESGWKWKYLVKKHREGELITRYVEASAAQEAVNLLLALENEPVRVNVWIDRHMNPALLNRMKQTIRARRKRHFNAEHQHTRKKSIDLEFMVWQRLAGLAQRRGKTLSETIVQLIEDAEHKEKYATTMSTLKQDLQALLGKK.

The protein belongs to the MatP family. In terms of assembly, homodimer.

The protein localises to the cytoplasm. Functionally, required for spatial organization of the terminus region of the chromosome (Ter macrodomain) during the cell cycle. Prevents early segregation of duplicated Ter macrodomains during cell division. Binds specifically to matS, which is a 13 bp signature motif repeated within the Ter macrodomain. This Salmonella arizonae (strain ATCC BAA-731 / CDC346-86 / RSK2980) protein is Macrodomain Ter protein.